The following is a 547-amino-acid chain: MTALTDTPTWQTLASLAEDVKQQHMRDWFASDTSRASKYQQTACGIELDFSKNLITDDVLKALFALADESQVSQKRDAMFKGDIINHTEKRAVLHTALRNFSGEPVYVDGQDVMPEVLACQDKIKDFVASIHSGERKGYTGKALKQIVSIGIGGSFLGPKIMSEALKPYWFDGVKVHFVANVDGCHIQDVLANLDHEETLVVMSSKSFTTQETLQNTLTAKDWFLNAGGTQQDIAKHFIAVSSNIKAATDFGMAEDNIFPMWDWVGGRYSLWSAIGLPIALTLGYDNYRQLLQGAFEMDEHFKTAPAEQNLPMLTALLGVWYINFFGAQSHVLLPYYHYLRGFPAYVQQLDMESNGKNISGDTTAVDYATGPIIWGSEGTNGQHSFHQLIHQGTLLIPADFMLPLNVPNQDNTHHAMLASNCFGQTQALMQGKTFDECYADLEGKGLDEAERVKLATHKTMPGNKPSNTLLFEQMDPKTLGSLVAMYEHKVFVQGAIWGVNSFDQWGVELGKELGNQVLDKIVNTDAALGFDSSTNALIARFRQANS.

E353 serves as the catalytic Proton donor. Residues H384 and K512 contribute to the active site.

It belongs to the GPI family.

It is found in the cytoplasm. The catalysed reaction is alpha-D-glucose 6-phosphate = beta-D-fructose 6-phosphate. It participates in carbohydrate biosynthesis; gluconeogenesis. The protein operates within carbohydrate degradation; glycolysis; D-glyceraldehyde 3-phosphate and glycerone phosphate from D-glucose: step 2/4. Its function is as follows. Catalyzes the reversible isomerization of glucose-6-phosphate to fructose-6-phosphate. This Pseudoalteromonas atlantica (strain T6c / ATCC BAA-1087) protein is Glucose-6-phosphate isomerase.